The sequence spans 266 residues: MSNFQAALLLTLLAGLSTGIGSAMALAVRHTNKRFLALSLGFSAGIMLYVSFMEIIPQSQEALSAGLSAKAGAWVSTISFFGGMLFTWAIDQMVPSFENPHEMSMIGPMTDAEKSDTRLHRMGIFTAAAIAIHNFPEGMAVFFSALSNQELGIVIASTIALHNIPEGMAVAVPIYFATKSRKRAFSLSFLSGLAEPLGALVGYTLLRPFLTPFVLGIVLASVSGIMVYISLDELLPSAEEYGEHHLAITGLIAGMAVMALSLLLLT.

The next 8 membrane-spanning stretches (helical) occupy residues 8-28, 36-56, 71-91, 123-143, 152-172, 185-205, 209-229, and 246-266; these read LLLT…ALAV, LALS…MEII, AGAW…WAID, GIFT…AVFF, GIVI…AVAV, FSLS…GYTL, FLTP…MVYI, and LAIT…LLLT. Residues Asn134 and Glu137 each coordinate Fe(2+). The Zn(2+) site is built by Glu137 and His162. Residues Asn163, Glu166, and Glu195 each coordinate Fe(2+). Residue Glu166 participates in Zn(2+) binding.

It belongs to the ZIP transporter (TC 2.A.5) family. ZupT subfamily.

Its subcellular location is the cell inner membrane. It carries out the reaction Zn(2+)(in) = Zn(2+)(out). Functionally, mediates zinc uptake. May also transport other divalent cations. The chain is Zinc transporter ZupT from Chlorobium luteolum (strain DSM 273 / BCRC 81028 / 2530) (Pelodictyon luteolum).